The sequence spans 354 residues: Trans-L-3-hydroxyproline dehydratase (354 aa).

Residue cysteine 104 is the Proton acceptor of the active site. Substrate is bound by residues 105-106 (GH), aspartate 269, and 274-275 (GS).

This sequence belongs to the proline racemase family. Homodimer.

The catalysed reaction is trans-3-hydroxy-L-proline = 1-pyrroline-2-carboxylate + H2O. Functionally, catalyzes the dehydration of trans-3-hydroxy-L-proline to delta-1-pyrroline-2-carboxylate (Pyr2C). This is Trans-L-3-hydroxyproline dehydratase (L3hypdh) from Mus musculus (Mouse).